Reading from the N-terminus, the 257-residue chain is Caspase-14 (257 aa).

Active-site residues include His93 and Cys136. Residues Asp156–Leu167 constitute a propeptide that is removed on maturation.

The protein belongs to the peptidase C14A family. In terms of assembly, heterodimer of a large and a small subunit, both processed from the precursor; the mature active form is a p17/p10 dimer and the intermediate form a p20/p8 dimer. Maturation by proteolytic processing appears to be a two-step process. The precursor is processed by KLK7 to yield the p20/p8 intermediate form which acts the precursor to yield the p17/p10 mature form. Initially it was reported that cleavage by granzyme B, caspase-8 and -10 generates the two active subunits, however the physiological relevance has not been established. In terms of tissue distribution, embryo, adult liver and less in adult brain and kidney. Expressed in differentiating keratinocytes of embryonic skin (at protein level). Expressed in keratinocytes of adult skin suprabasal layers (at protein level).

It localises to the cytoplasm. It is found in the nucleus. Its function is as follows. Non-apoptotic caspase which is involved in epidermal differentiation. Seems to play a role in keratinocyte differentiation and is required for cornification. Regulates maturation of the epidermis by proteolytically processing filaggrin. In vitro is equally active on the synthetic caspase substrates WEHD-ACF and IETD-AFC. Involved in processing of prosaposin in the epidermis. May be involved in retinal pigment epithelium cell barrier function. The polypeptide is Caspase-14 (Casp14) (Mus musculus (Mouse)).